A 143-amino-acid polypeptide reads, in one-letter code: Transcriptional regulator MraZ (143 aa).

SpoVT-AbrB domains follow at residues 5–47 and 76–119; these read EYKH…SLKE and ACEC…SEEN.

This sequence belongs to the MraZ family. In terms of assembly, forms oligomers.

Its subcellular location is the cytoplasm. It is found in the nucleoid. The chain is Transcriptional regulator MraZ from Caldicellulosiruptor saccharolyticus (strain ATCC 43494 / DSM 8903 / Tp8T 6331).